Here is a 147-residue protein sequence, read N- to C-terminus: Large ribosomal subunit protein uL11 (147 aa).

It belongs to the universal ribosomal protein uL11 family. As to quaternary structure, part of the ribosomal stalk of the 50S ribosomal subunit. Interacts with L10 and the large rRNA to form the base of the stalk. L10 forms an elongated spine to which L12 dimers bind in a sequential fashion forming a multimeric L10(L12)X complex. In terms of processing, one or more lysine residues are methylated.

Functionally, forms part of the ribosomal stalk which helps the ribosome interact with GTP-bound translation factors. The protein is Large ribosomal subunit protein uL11 of Corynebacterium aurimucosum (strain ATCC 700975 / DSM 44827 / CIP 107346 / CN-1) (Corynebacterium nigricans).